The following is a 588-amino-acid chain: Myc box-dependent-interacting protein 1 (588 aa).

Ala-2 is subject to N-acetylalanine. Residues 2–122 (AEMGSKGVTA…DYHQKLVDQA (121 aa)) form an interaction with BIN2 region. Coiled-coil stretches lie at residues 15 to 42 (ASNV…TKDE) and 193 to 274 (HLVA…EKQH). The 248-residue stretch at 29-276 (VLQKLGKADE…LVSLEKQHGS (248 aa)) folds into the BAR domain. Positions 279–355 (FTVKAQPSDS…PKHTPSKEMK (77 aa)) are disordered. A phosphoserine mark is found at Ser-296, Ser-298, and Ser-304. The residue at position 308 (Thr-308) is a Phosphothreonine. 2 positions are modified to phosphoserine: Ser-324 and Ser-332. Positions 379–422 (FEAPGPFSEQASLLDLDFEPLPPVASPVKAPTPSGQSIPWDLWE) are clathrin-binding. Residues 448–483 (PSQTAEPGPAQPAEASEVVGGTQEPGETAASEATSS) are disordered. Positions 474–483 (ETAASEATSS) are enriched in low complexity. Positions 515–588 (GFMFKVQAQH…FPENFTERVQ (74 aa)) constitute an SH3 domain.

In terms of assembly, heterodimer with AMPH. Binds SH3GLB1. Interacts (via SH3 domain) with DNM1. Interacts with SYNJ1. Interacts (via SH3 domain) with DNM2. Interacts with CLTC. Interacts with AP2A2. Interacts with AP2B1. Interacts with MYC (via N-terminal transactivation domain); the interaction requires the integrity of the conserved MYC box regions 1 and 2. Interacts with BIN2. Interacts with SNX4. Interacts (via BAR domain) with BACE1. Binds (via BAR domain) F-actin. Phosphorylated by protein kinase C. Highly expressed in the brain and muscle. Isoform AMPH2-1 is expressed only in the brain where it is concentrated in axon initial segments and nodes of Ranvier. Isoform AMPH2-2 is widely expressed.

It localises to the nucleus. It is found in the cytoplasm. The protein localises to the endosome. The protein resides in the cell membrane. Its subcellular location is the sarcolemma. It localises to the T-tubule. Its function is as follows. Is a key player in the control of plasma membrane curvature, and membrane shaping and remodeling. Required in muscle cells for the formation of T-tubules, tubular invaginations of the plasma membrane that function in depolarization-contraction coupling. Required in muscle cells for the formation of T-tubules, tubular invaginations of the plasma membrane that function in depolarization-contraction coupling. Is a negative regulator of endocytosis. Is also involved in the regulation of intracellular vesicles sorting, modulation of BACE1 trafficking and the control of amyloid-beta production. In neuronal circuits, endocytosis regulation may influence the internalization of PHF-tau aggregates. May be involved in the regulation of MYC activity and the control cell proliferation. This Rattus norvegicus (Rat) protein is Myc box-dependent-interacting protein 1 (Bin1).